We begin with the raw amino-acid sequence, 280 residues long: Large ribosomal subunit protein uL2 (280 aa).

Disordered stretches follow at residues 1–25 (MGIRKYRPMTPGTRQRSGADFAEVT) and 230–280 (HPHG…SGRG). The segment covering 257-280 (KTRKRRKPSSKFIIRRRKTASGRG) has biased composition (basic residues).

Belongs to the universal ribosomal protein uL2 family. In terms of assembly, part of the 50S ribosomal subunit. Forms a bridge to the 30S subunit in the 70S ribosome.

Its function is as follows. One of the primary rRNA binding proteins. Required for association of the 30S and 50S subunits to form the 70S ribosome, for tRNA binding and peptide bond formation. It has been suggested to have peptidyltransferase activity; this is somewhat controversial. Makes several contacts with the 16S rRNA in the 70S ribosome. The polypeptide is Large ribosomal subunit protein uL2 (Gloeobacter violaceus (strain ATCC 29082 / PCC 7421)).